The primary structure comprises 73 residues: Sec-independent protein translocase protein TatA (73 aa).

The helical transmembrane segment at 1–21 (MGSFSIWHWLIVLVIVMLVFG) threads the bilayer. Residues 44–73 (KSAEDPNEQIPQSTTTAEKTVDVQAKDINK) form a disordered region. A compositionally biased stretch (polar residues) spans 52–61 (QIPQSTTTAE). Over residues 62–73 (KTVDVQAKDINK) the composition is skewed to basic and acidic residues.

The protein belongs to the TatA/E family. The Tat system comprises two distinct complexes: a TatABC complex, containing multiple copies of TatA, TatB and TatC subunits, and a separate TatA complex, containing only TatA subunits. Substrates initially bind to the TatABC complex, which probably triggers association of the separate TatA complex to form the active translocon.

It is found in the cell inner membrane. In terms of biological role, part of the twin-arginine translocation (Tat) system that transports large folded proteins containing a characteristic twin-arginine motif in their signal peptide across membranes. TatA could form the protein-conducting channel of the Tat system. This Polynucleobacter asymbioticus (strain DSM 18221 / CIP 109841 / QLW-P1DMWA-1) (Polynucleobacter necessarius subsp. asymbioticus) protein is Sec-independent protein translocase protein TatA.